The chain runs to 111 residues: UPF0145 protein BTH_I2656 (111 aa).

This sequence belongs to the UPF0145 family.

The chain is UPF0145 protein BTH_I2656 from Burkholderia thailandensis (strain ATCC 700388 / DSM 13276 / CCUG 48851 / CIP 106301 / E264).